The following is a 776-amino-acid chain: Acetone carboxylase alpha subunit (776 aa).

In terms of assembly, heterohexamer of two alpha, two beta and two gamma subunits. The cofactor is Fe cation. Mg(2+) serves as cofactor. Requires Zn(2+) as cofactor. In terms of processing, the N-terminus is blocked.

The catalysed reaction is acetone + hydrogencarbonate + 2 ATP + 3 H2O = acetoacetate + 2 AMP + 4 phosphate + 4 H(+). Its function is as follows. Catalyzes the carboxylation of acetone to form acetoacetate. Has a reduced activity on butanone, and no activity on 2-pentatone, 3-pentatone, 2-hexanone, chloroacetone, pyruvate, phosphoenolpyruvate, acetaldehyde, propionaldehyde and propylene oxide. The polypeptide is Acetone carboxylase alpha subunit (Xanthobacter autotrophicus (strain ATCC BAA-1158 / Py2)).